The primary structure comprises 437 residues: UDP-N-acetylmuramate--L-alanine ligase (437 aa).

Residue 108–114 coordinates ATP; the sequence is GAHGKTS.

This sequence belongs to the MurCDEF family.

It localises to the cytoplasm. The enzyme catalyses UDP-N-acetyl-alpha-D-muramate + L-alanine + ATP = UDP-N-acetyl-alpha-D-muramoyl-L-alanine + ADP + phosphate + H(+). It participates in cell wall biogenesis; peptidoglycan biosynthesis. Its function is as follows. Cell wall formation. In Staphylococcus saprophyticus subsp. saprophyticus (strain ATCC 15305 / DSM 20229 / NCIMB 8711 / NCTC 7292 / S-41), this protein is UDP-N-acetylmuramate--L-alanine ligase.